The following is a 79-amino-acid chain: Cell division protein ZapB (79 aa).

The stretch at 6-78 forms a coiled coil; it reads FEKLEVKVQQ…LRALLGKMEE (73 aa).

This sequence belongs to the ZapB family. In terms of assembly, homodimer. The ends of the coiled-coil dimer bind to each other, forming polymers. Interacts with FtsZ.

It is found in the cytoplasm. In terms of biological role, non-essential, abundant cell division factor that is required for proper Z-ring formation. It is recruited early to the divisome by direct interaction with FtsZ, stimulating Z-ring assembly and thereby promoting cell division earlier in the cell cycle. Its recruitment to the Z-ring requires functional FtsA or ZipA. In Yersinia pseudotuberculosis serotype O:1b (strain IP 31758), this protein is Cell division protein ZapB.